Reading from the N-terminus, the 41-residue chain is Large ribosomal subunit protein bL36 (41 aa).

Belongs to the bacterial ribosomal protein bL36 family.

The protein is Large ribosomal subunit protein bL36 of Rickettsia prowazekii (strain Madrid E).